A 314-amino-acid polypeptide reads, in one-letter code: Dihydroorotate dehydrogenase (fumarate) (314 aa).

Substrate contacts are provided by residues lysine 46, 70-74, and asparagine 130; that span reads NSMGL. 46 to 47 lines the FMN pocket; sequence KS. An FMN-binding site is contributed by asparagine 130. Residues serine 132 and cysteine 133 each act as nucleophile in the active site. Residues lysine 167 and isoleucine 195 each contribute to the FMN site. A substrate-binding site is contributed by 196–197; it reads NS. FMN is bound by residues glycine 224, 252–253, and 274–275; these read GG and GT.

It belongs to the dihydroorotate dehydrogenase family. Type 1 subfamily. In terms of assembly, homodimer. Requires FMN as cofactor.

The protein resides in the cytoplasm. It carries out the reaction (S)-dihydroorotate + fumarate = orotate + succinate. Its pathway is pyrimidine metabolism; UMP biosynthesis via de novo pathway. In terms of biological role, catalyzes the conversion of dihydroorotate to orotate with fumarate as the electron acceptor. The chain is Dihydroorotate dehydrogenase (fumarate) (URA1) from Saccharomyces paradoxus (Yeast).